The sequence spans 163 residues: ADP-ribosylation factor-like protein 2-binding protein (163 aa).

This sequence belongs to the ARL2BP family. In terms of assembly, found in a complex with ARL2BP, ARL2 and SLC25A6. Found in a complex with ARL2, ARL2BP and SLC25A4. Interacts with STAT2, STAT3 and STAT4. Interacts with GTP-bound ARL2 and ARL3; the complex ARL2-ARL2BP as well as ARL2BP alone, binds to SLC25A4. Interaction with ARL2 may be required for targeting to cilia basal body. Interacts with STAT3; interaction is enhanced with ARL2. In terms of tissue distribution, expressed in retina pigment epithelial cells (at protein level). Widely expressed.

It localises to the cytoplasm. Its subcellular location is the mitochondrion intermembrane space. It is found in the cytoskeleton. The protein resides in the microtubule organizing center. The protein localises to the centrosome. It localises to the nucleus. Its subcellular location is the spindle. It is found in the cilium basal body. Functionally, together with ARL2, plays a role in the nuclear translocation, retention and transcriptional activity of STAT3. May play a role as an effector of ARL2. This chain is ADP-ribosylation factor-like protein 2-binding protein (ARL2BP), found in Homo sapiens (Human).